The primary structure comprises 1123 residues: Translation initiation factor IF-2 (1123 aa).

Disordered stretches follow at residues 52-452 (LLKA…KVHI) and 480-512 (LARP…RQRQ). Composition is skewed to low complexity over residues 54–73 (KAGS…PGKA), 94–113 (KPAA…AKSP), and 121–133 (AAPS…KASA). A compositionally biased stretch (pro residues) spans 170-187 (PPSPPARPVPQQPSPPSA). The segment covering 193 to 206 (APIRRAAPNDAPRP) has biased composition (low complexity). Pro residues-rich tracts occupy residues 207-217 (ANAPPSRPQPK) and 258-268 (SPRPAVSPRPS). A compositionally biased stretch (low complexity) spans 285–304 (RPGAPTRPGTGAGRPSRPGG). Residues 320-339 (GNRGEGGRPPGGARPAGGGN) show a composition bias toward gly residues. Positions 388 to 403 (ATPPVSRPTATPPSPA) are enriched in pro residues. Residues 412–422 (FRPGAGPGGQR) show a composition bias toward gly residues. The span at 425–439 (GRPDWDDSAKLDALR) shows a compositional bias: basic and acidic residues. A compositionally biased stretch (low complexity) spans 486–499 (PKSQQKAAPKPVAA). The span at 500-512 (MRKRRKETTRQRQ) shows a compositional bias: basic residues. Positions 615–787 (RRPPVVTVMG…LLLVTEVEDL (173 aa)) constitute a tr-type G domain. The interval 624 to 631 (GHVDHGKT) is G1. 624–631 (GHVDHGKT) contributes to the GTP binding site. The G2 stretch occupies residues 649–653 (GITQH). The G3 stretch occupies residues 674–677 (DTPG). GTP contacts are provided by residues 674-678 (DTPGH) and 728-731 (NKID). The G4 stretch occupies residues 728–731 (NKID). Residues 764-766 (SAI) are G5.

The protein belongs to the TRAFAC class translation factor GTPase superfamily. Classic translation factor GTPase family. IF-2 subfamily.

The protein localises to the cytoplasm. In terms of biological role, one of the essential components for the initiation of protein synthesis. Protects formylmethionyl-tRNA from spontaneous hydrolysis and promotes its binding to the 30S ribosomal subunits. Also involved in the hydrolysis of GTP during the formation of the 70S ribosomal complex. This chain is Translation initiation factor IF-2, found in Synechococcus sp. (strain WH7803).